A 100-amino-acid chain; its full sequence is Large ribosomal subunit protein bL21 (100 aa).

The protein belongs to the bacterial ribosomal protein bL21 family. As to quaternary structure, part of the 50S ribosomal subunit. Contacts protein L20.

In terms of biological role, this protein binds to 23S rRNA in the presence of protein L20. The polypeptide is Large ribosomal subunit protein bL21 (Corynebacterium urealyticum (strain ATCC 43042 / DSM 7109)).